Consider the following 117-residue polypeptide: NADH-ubiquinone oxidoreductase chain 3 (117 aa).

Helical transmembrane passes span 3-23, 56-76, and 85-105; these read LLLT…IVSF, FFLV…LLPL, and PMFT…GLIY.

The protein belongs to the complex I subunit 3 family.

The protein localises to the mitochondrion membrane. It carries out the reaction a ubiquinone + NADH + 5 H(+)(in) = a ubiquinol + NAD(+) + 4 H(+)(out). Core subunit of the mitochondrial membrane respiratory chain NADH dehydrogenase (Complex I) that is believed to belong to the minimal assembly required for catalysis. Complex I functions in the transfer of electrons from NADH to the respiratory chain. The immediate electron acceptor for the enzyme is believed to be ubiquinone. In Tetraodon nigroviridis (Spotted green pufferfish), this protein is NADH-ubiquinone oxidoreductase chain 3 (MT-ND3).